The primary structure comprises 111 residues: Large ribosomal subunit protein uL22 (111 aa).

This sequence belongs to the universal ribosomal protein uL22 family. Part of the 50S ribosomal subunit.

Its function is as follows. This protein binds specifically to 23S rRNA; its binding is stimulated by other ribosomal proteins, e.g. L4, L17, and L20. It is important during the early stages of 50S assembly. It makes multiple contacts with different domains of the 23S rRNA in the assembled 50S subunit and ribosome. Functionally, the globular domain of the protein is located near the polypeptide exit tunnel on the outside of the subunit, while an extended beta-hairpin is found that lines the wall of the exit tunnel in the center of the 70S ribosome. This is Large ribosomal subunit protein uL22 from Clostridium acetobutylicum (strain ATCC 824 / DSM 792 / JCM 1419 / IAM 19013 / LMG 5710 / NBRC 13948 / NRRL B-527 / VKM B-1787 / 2291 / W).